Here is a 205-residue protein sequence, read N- to C-terminus: Large ribosomal subunit protein uL13 (205 aa).

The protein belongs to the universal ribosomal protein uL13 family.

This Drosophila melanogaster (Fruit fly) protein is Large ribosomal subunit protein uL13 (RpL13A).